The sequence spans 319 residues: Beta-ketoacyl-[acyl-carrier-protein] synthase III (319 aa).

Catalysis depends on residues cysteine 110 and histidine 246. An ACP-binding region spans residues 247 to 251 (QANYR). Asparagine 276 is an active-site residue.

It belongs to the thiolase-like superfamily. FabH family. As to quaternary structure, homodimer.

It localises to the cytoplasm. The catalysed reaction is malonyl-[ACP] + acetyl-CoA + H(+) = 3-oxobutanoyl-[ACP] + CO2 + CoA. The protein operates within lipid metabolism; fatty acid biosynthesis. Its function is as follows. Catalyzes the condensation reaction of fatty acid synthesis by the addition to an acyl acceptor of two carbons from malonyl-ACP. Catalyzes the first condensation reaction which initiates fatty acid synthesis and may therefore play a role in governing the total rate of fatty acid production. Possesses both acetoacetyl-ACP synthase and acetyl transacylase activities. Its substrate specificity determines the biosynthesis of branched-chain and/or straight-chain of fatty acids. The chain is Beta-ketoacyl-[acyl-carrier-protein] synthase III from Lactobacillus delbrueckii subsp. bulgaricus (strain ATCC 11842 / DSM 20081 / BCRC 10696 / JCM 1002 / NBRC 13953 / NCIMB 11778 / NCTC 12712 / WDCM 00102 / Lb 14).